A 24-amino-acid polypeptide reads, in one-letter code: Coenzyme PQQ synthesis protein A (24 aa).

Positions glutamate 16–tyrosine 20 form a cross-link, pyrroloquinoline quinone (Glu-Tyr).

It belongs to the PqqA family.

The protein operates within cofactor biosynthesis; pyrroloquinoline quinone biosynthesis. Functionally, required for coenzyme pyrroloquinoline quinone (PQQ) biosynthesis. PQQ is probably formed by cross-linking a specific glutamate to a specific tyrosine residue and excising these residues from the peptide. The protein is Coenzyme PQQ synthesis protein A of Acinetobacter baumannii (strain SDF).